The sequence spans 308 residues: Cytochrome b (308 aa).

The next 4 helical transmembrane spans lie at 1 to 21 (FGSL…LLAM), 45 to 66 (WLIR…YLHI), 81 to 101 (WNIG…GYVL), and 146 to 166 (FFAF…VHLT). Heme b contacts are provided by His-51 and His-65. Heme b is bound by residues His-150 and His-164. His-169 serves as a coordination point for a ubiquinone. Transmembrane regions (helical) follow at residues 194–214 (IKDL…ALFS), 256–276 (LGGV…PLLH), and 288–308 (LSQI…WVGS).

This sequence belongs to the cytochrome b family. As to quaternary structure, the cytochrome bc1 complex contains 11 subunits: 3 respiratory subunits (MT-CYB, CYC1 and UQCRFS1), 2 core proteins (UQCRC1 and UQCRC2) and 6 low-molecular weight proteins (UQCRH/QCR6, UQCRB/QCR7, UQCRQ/QCR8, UQCR10/QCR9, UQCR11/QCR10 and a cleavage product of UQCRFS1). This cytochrome bc1 complex then forms a dimer. It depends on heme b as a cofactor.

It is found in the mitochondrion inner membrane. In terms of biological role, component of the ubiquinol-cytochrome c reductase complex (complex III or cytochrome b-c1 complex) that is part of the mitochondrial respiratory chain. The b-c1 complex mediates electron transfer from ubiquinol to cytochrome c. Contributes to the generation of a proton gradient across the mitochondrial membrane that is then used for ATP synthesis. The chain is Cytochrome b (MT-CYB) from Corvus corax (Common raven).